A 351-amino-acid polypeptide reads, in one-letter code: Polyribonucleotide 5'-hydroxyl-kinase TK1956 (351 aa).

34–41 (GGVDSGKS) lines the ATP pocket.

A divalent metal cation serves as cofactor.

It carries out the reaction a 5'-end dephospho-2'-deoxyribonucleoside-DNA + ATP = a 5'-end 5'-phospho-2'-deoxyribonucleoside-DNA + ADP + H(+). The enzyme catalyses a 5'-end dephospho-ribonucleoside-RNA + ATP = a 5'-end 5'-phospho-ribonucleoside-RNA + ADP + H(+). Functionally, polynucleotide kinase that can phosphorylate the 5'-hydroxyl groups of both single-stranded RNA (ssRNA) and single-stranded DNA (ssDNA). Exhibits a strong preference for ssRNA. The protein is Polyribonucleotide 5'-hydroxyl-kinase TK1956 of Thermococcus kodakarensis (strain ATCC BAA-918 / JCM 12380 / KOD1) (Pyrococcus kodakaraensis (strain KOD1)).